The following is a 305-amino-acid chain: Protoheme IX farnesyltransferase (305 aa).

The next 9 membrane-spanning stretches (helical) occupy residues 31-51 (VMSL…YSVH), 52-72 (PFIA…AGAI), 96-118 (VIES…FFMA), 122-144 (NLLA…TIWL), 151-171 (NIVI…AAVS), 180-200 (ILFL…ALFC), 225-245 (ILIY…IGMN), 247-267 (FIYL…AGSL), and 281-301 (FAYS…TNTI).

The protein belongs to the UbiA prenyltransferase family. Protoheme IX farnesyltransferase subfamily.

Its subcellular location is the cell inner membrane. It carries out the reaction heme b + (2E,6E)-farnesyl diphosphate + H2O = Fe(II)-heme o + diphosphate. It functions in the pathway porphyrin-containing compound metabolism; heme O biosynthesis; heme O from protoheme: step 1/1. Converts heme B (protoheme IX) to heme O by substitution of the vinyl group on carbon 2 of heme B porphyrin ring with a hydroxyethyl farnesyl side group. This is Protoheme IX farnesyltransferase from Rickettsia peacockii (strain Rustic).